Here is a 172-residue protein sequence, read N- to C-terminus: NADH-ubiquinone oxidoreductase chain 6 (172 aa).

4 helical membrane passes run 1-21 (MNNY…GLAL), 38-58 (VGCL…VFLI), 86-106 (WLIL…ICVL), and 147-167 (CATW…FIII).

This sequence belongs to the complex I subunit 6 family. As to quaternary structure, core subunit of respiratory chain NADH dehydrogenase (Complex I) which is composed of 45 different subunits.

It localises to the mitochondrion inner membrane. The catalysed reaction is a ubiquinone + NADH + 5 H(+)(in) = a ubiquinol + NAD(+) + 4 H(+)(out). Core subunit of the mitochondrial membrane respiratory chain NADH dehydrogenase (Complex I) which catalyzes electron transfer from NADH through the respiratory chain, using ubiquinone as an electron acceptor. Essential for the catalytic activity and assembly of complex I. The sequence is that of NADH-ubiquinone oxidoreductase chain 6 (Mtnd6) from Mus musculus (Mouse).